A 107-amino-acid polypeptide reads, in one-letter code: Phosphoribosyl-ATP pyrophosphatase (107 aa).

This sequence belongs to the PRA-PH family.

It is found in the cytoplasm. It catalyses the reaction 1-(5-phospho-beta-D-ribosyl)-ATP + H2O = 1-(5-phospho-beta-D-ribosyl)-5'-AMP + diphosphate + H(+). The protein operates within amino-acid biosynthesis; L-histidine biosynthesis; L-histidine from 5-phospho-alpha-D-ribose 1-diphosphate: step 2/9. The sequence is that of Phosphoribosyl-ATP pyrophosphatase from Methylobacterium radiotolerans (strain ATCC 27329 / DSM 1819 / JCM 2831 / NBRC 15690 / NCIMB 10815 / 0-1).